The following is a 28-amino-acid chain: Kappa-buthitoxin-Tt2b (28 aa).

Disulfide bonds link C2–C24, C7–C20, and C11–C26.

In terms of tissue distribution, expressed by the venom gland.

It is found in the secreted. Functionally, blocks potassium channels Shaker-IR (with inactivation domain removed) and hKv1.2/KCNA2. The chain is Kappa-buthitoxin-Tt2b from Tityus trivittatus (Argentinean scorpion).